The chain runs to 72 residues: U-actitoxin-Aeq5b (72 aa).

The first 20 residues, 1-20 (MNQVMTIFLVLGVIVYSVES), serve as a signal peptide directing secretion. 4 disulfide bridges follow: Cys33/Cys71, Cys37/Cys66, Cys44/Cys59, and Cys50/Cys56.

Belongs to the Acrorhagin I family. Expressed by acrorhagi.

It localises to the secreted. The protein localises to the nematocyst. Toxin that is lethal to crab. It interacts with divalent metal ions (zinc and nickel) suggesting it may function as a metal ion chelator to regulate metal ion levels or as a metal ion transporter, or that its function is modulated by metal ions. Is not active against any of the voltage-gated potassium and sodium channels tested. In addition, it does not show activity in bacterial and fungal growth inhibitory assays as well as in hemolytic assays. The chain is U-actitoxin-Aeq5b from Actinia equina (Beadlet anemone).